We begin with the raw amino-acid sequence, 260 residues long: Snake venom serine protease KN14 (260 aa).

The N-terminal stretch at 1–18 (MVLIRVLANLLILQLSYA) is a signal peptide. The propeptide occupies 19 to 24 (QKSSEL). Residues 25–251 (VIGGDECNIN…HLDWIQSIIA (227 aa)) enclose the Peptidase S1 domain. 5 disulfide bridges follow: C31–C165, C100–C258, C144–C212, C176–C191, and C202–C227. Catalysis depends on H67, which acts as the Charge relay system. N105 carries N-linked (GlcNAc...) asparagine glycosylation. The active-site Charge relay system is the D112. N-linked (GlcNAc...) asparagine glycosylation is present at N172. The Charge relay system role is filled by S206. N-linked (GlcNAc...) asparagine glycosylation is found at N213 and N255.

Belongs to the peptidase S1 family. Snake venom subfamily. In terms of assembly, monomer. In terms of tissue distribution, expressed by the venom gland.

It is found in the secreted. In terms of biological role, snake venom serine protease that may act in the hemostasis system of the prey. The protein is Snake venom serine protease KN14 of Trimeresurus stejnegeri (Chinese green tree viper).